The following is a 198-amino-acid chain: Dual specificity protein phosphatase 14 (198 aa).

The region spanning 26 to 167 (GIAQITSSLF…LIDYERQLFG (142 aa)) is the Tyrosine-protein phosphatase domain. The Phosphocysteine intermediate role is filled by Cys111.

The protein belongs to the protein-tyrosine phosphatase family. Non-receptor class dual specificity subfamily. Interacts with CD28.

The enzyme catalyses O-phospho-L-tyrosyl-[protein] + H2O = L-tyrosyl-[protein] + phosphate. It catalyses the reaction O-phospho-L-seryl-[protein] + H2O = L-seryl-[protein] + phosphate. The catalysed reaction is O-phospho-L-threonyl-[protein] + H2O = L-threonyl-[protein] + phosphate. Involved in the inactivation of MAP kinases. Dephosphorylates ERK, JNK and p38 MAP-kinases. Plays a negative role in TCR signaling by dephosphorylating MAP3K7 adapter TAB1 leading to its inactivation. The chain is Dual specificity protein phosphatase 14 (DUSP14) from Bos taurus (Bovine).